The chain runs to 242 residues: tRNA pseudouridine synthase A (242 aa).

The active-site Nucleophile is aspartate 51. A substrate-binding site is contributed by tyrosine 107.

It belongs to the tRNA pseudouridine synthase TruA family. In terms of assembly, homodimer.

It catalyses the reaction uridine(38/39/40) in tRNA = pseudouridine(38/39/40) in tRNA. In terms of biological role, formation of pseudouridine at positions 38, 39 and 40 in the anticodon stem and loop of transfer RNAs. The protein is tRNA pseudouridine synthase A of Helicobacter pylori (strain P12).